We begin with the raw amino-acid sequence, 165 residues long: Cytochrome c-550-like protein (165 aa).

The signal sequence occupies residues 1 to 30 (MLNKSLLIRFVLTILIIVQVIIFDTQPVQA). Residues Cys-75, Cys-78, His-79, and Cys-129 each contribute to the heme c site.

Belongs to the cytochrome c family. PsbV subfamily. Requires heme c as cofactor.

It localises to the cellular thylakoid membrane. Possible low-potential cytochrome c. This is Cytochrome c-550-like protein (psbV2) from Trichodesmium erythraeum (strain IMS101).